Here is a 245-residue protein sequence, read N- to C-terminus: Phosphoribosylaminoimidazole-succinocarboxamide synthase (245 aa).

The protein belongs to the SAICAR synthetase family.

The catalysed reaction is 5-amino-1-(5-phospho-D-ribosyl)imidazole-4-carboxylate + L-aspartate + ATP = (2S)-2-[5-amino-1-(5-phospho-beta-D-ribosyl)imidazole-4-carboxamido]succinate + ADP + phosphate + 2 H(+). It participates in purine metabolism; IMP biosynthesis via de novo pathway; 5-amino-1-(5-phospho-D-ribosyl)imidazole-4-carboxamide from 5-amino-1-(5-phospho-D-ribosyl)imidazole-4-carboxylate: step 1/2. In Nostoc punctiforme (strain ATCC 29133 / PCC 73102), this protein is Phosphoribosylaminoimidazole-succinocarboxamide synthase.